We begin with the raw amino-acid sequence, 103 residues long: Small ribosomal subunit protein uS10 (103 aa).

It belongs to the universal ribosomal protein uS10 family. Part of the 30S ribosomal subunit.

Involved in the binding of tRNA to the ribosomes. This Pectobacterium atrosepticum (strain SCRI 1043 / ATCC BAA-672) (Erwinia carotovora subsp. atroseptica) protein is Small ribosomal subunit protein uS10.